Reading from the N-terminus, the 154-residue chain is Ribosomal RNA large subunit methyltransferase H (154 aa).

Residue Gly-102 coordinates S-adenosyl-L-methionine.

This sequence belongs to the RNA methyltransferase RlmH family. Homodimer.

The protein localises to the cytoplasm. The enzyme catalyses pseudouridine(1915) in 23S rRNA + S-adenosyl-L-methionine = N(3)-methylpseudouridine(1915) in 23S rRNA + S-adenosyl-L-homocysteine + H(+). In terms of biological role, specifically methylates the pseudouridine at position 1915 (m3Psi1915) in 23S rRNA. In Phenylobacterium zucineum (strain HLK1), this protein is Ribosomal RNA large subunit methyltransferase H.